The primary structure comprises 91 residues: Small ribosomal subunit protein bS20 (91 aa).

The segment at 1 to 25 (MANTKSAEKRHRQSLKRRARNVTVR) is disordered. Over residues 8-20 (EKRHRQSLKRRAR) the composition is skewed to basic residues.

Belongs to the bacterial ribosomal protein bS20 family.

Functionally, binds directly to 16S ribosomal RNA. The chain is Small ribosomal subunit protein bS20 from Myxococcus xanthus (strain DK1622).